A 139-amino-acid chain; its full sequence is Protein archease (139 aa).

Positions 12, 138, and 139 each coordinate Ca(2+).

The protein belongs to the archease family.

Its function is as follows. Activates the tRNA-splicing ligase complex by facilitating the enzymatic turnover of catalytic subunit RtcB. Acts by promoting the guanylylation of RtcB, a key intermediate step in tRNA ligation. Can also alter the NTP specificity of RtcB such that ATP, dGTP or ITP is used efficiently. The polypeptide is Protein archease (Saccharolobus solfataricus (strain ATCC 35092 / DSM 1617 / JCM 11322 / P2) (Sulfolobus solfataricus)).